A 701-amino-acid chain; its full sequence is Elongation factor G (701 aa).

One can recognise a tr-type G domain in the interval 8–290 (TQYRNIGISA…AIIEYLPSPK (283 aa)). GTP is bound by residues 17–24 (AHIDAGKT), 88–92 (DTPGH), and 142–145 (NKMD).

It belongs to the TRAFAC class translation factor GTPase superfamily. Classic translation factor GTPase family. EF-G/EF-2 subfamily.

The protein resides in the cytoplasm. Its function is as follows. Catalyzes the GTP-dependent ribosomal translocation step during translation elongation. During this step, the ribosome changes from the pre-translocational (PRE) to the post-translocational (POST) state as the newly formed A-site-bound peptidyl-tRNA and P-site-bound deacylated tRNA move to the P and E sites, respectively. Catalyzes the coordinated movement of the two tRNA molecules, the mRNA and conformational changes in the ribosome. This chain is Elongation factor G, found in Buchnera aphidicola subsp. Cinara cedri (strain Cc).